Reading from the N-terminus, the 338-residue chain is L-serine dehydratase (338 aa).

An N6-(pyridoxal phosphate)lysine modification is found at lysine 39.

The protein belongs to the serine/threonine dehydratase family. Pyridoxal 5'-phosphate serves as cofactor.

The protein resides in the cytoplasm. It carries out the reaction L-serine = pyruvate + NH4(+). It functions in the pathway carbohydrate biosynthesis; gluconeogenesis. This chain is L-serine dehydratase (SDL1), found in Saccharomyces cerevisiae (Baker's yeast).